We begin with the raw amino-acid sequence, 66 residues long: Large ribosomal subunit protein uL29 (66 aa).

The protein belongs to the universal ribosomal protein uL29 family.

The chain is Large ribosomal subunit protein uL29 from Roseiflexus castenholzii (strain DSM 13941 / HLO8).